Here is a 208-residue protein sequence, read N- to C-terminus: MGRYRESVCRLCRRENLKLFLKGDRCFSDKCAFDRRGYPPGEHGQLRPKFSGYGIQLREKQKVKRMYGLSEGQFRRVFAEADRRKGITGSTLLVLLESRLDNAVYRLGFVNSRTQGRQLIRHNHFLVNGKNVDIPSYVLSPGDVIEVREKSRNMQVIDESLAAVERRGVPQWLSLEKENKRGVVKNLPVREDITIPIQEQLIVELYSK.

An S4 RNA-binding domain is found at 98–158; it reads SRLDNAVYRL…EKSRNMQVID (61 aa).

It belongs to the universal ribosomal protein uS4 family. In terms of assembly, part of the 30S ribosomal subunit. Contacts protein S5. The interaction surface between S4 and S5 is involved in control of translational fidelity.

Its function is as follows. One of the primary rRNA binding proteins, it binds directly to 16S rRNA where it nucleates assembly of the body of the 30S subunit. In terms of biological role, with S5 and S12 plays an important role in translational accuracy. In Desulfosudis oleivorans (strain DSM 6200 / JCM 39069 / Hxd3) (Desulfococcus oleovorans), this protein is Small ribosomal subunit protein uS4.